Consider the following 145-residue polypeptide: Neutral phospholipase A2 homolog taipoxin beta chain 1 (145 aa).

Residues 1 to 27 (MHPAHLLVLLAVCVSLLGASDIPPLPL) form the signal peptide. Intrachain disulfides connect cysteine 38–cysteine 98, cysteine 54–cysteine 144, cysteine 56–cysteine 72, cysteine 71–cysteine 125, cysteine 78–cysteine 118, cysteine 87–cysteine 111, and cysteine 105–cysteine 116.

This sequence belongs to the phospholipase A2 family. Group I subfamily. D49 sub-subfamily. As to quaternary structure, heterotrimer of alpha, beta, and gamma chains; non-covalently linked. In terms of tissue distribution, expressed by the venom gland.

The protein resides in the secreted. Heterotrimer: Snake venom phospholipase A2 (PLA2) heterotrimer that acts as a potent presynaptic neurotoxin by blocking synaptic transmission and synaptic vesicle recycling. May act by binding in a calcium-dependent fashion to neurotonal pentraxin-1 (NPTX1) and neurotonal pentraxin-2 (NPTX2), but not to neuronal pentraxin receptor (NPTXR). Also binds to taipoxin-associated calcium binding protein 49 (RCN2), a protein localized in the lumen of endoplasmic reticulum. Functionally, monomer (beta chain): Snake venom phospholipase A2 homolog that is neither toxic nor enzymatically active. Does not bind calcium. The sequence is that of Neutral phospholipase A2 homolog taipoxin beta chain 1 from Oxyuranus scutellatus scutellatus (Australian taipan).